Here is a 1009-residue protein sequence, read N- to C-terminus: Protein naked cuticle (1009 aa).

Composition is skewed to polar residues over residues 68–83 and 121–130; these read IITT…ASNK and LPQDMSSSGS. The segment at 68-166 is disordered; that stretch reads IITTPPGNAS…QQQTAAAATG (99 aa). The span at 152–166 shows a compositional bias: low complexity; that stretch reads QQQQQQQQTAAAATG. Positions 206-282 are interaction with dsh; the sequence is EFTCDVSVEG…TVSPEGKSKS (77 aa). The EF-hand domain occupies 217–253; sequence KSSQPLQFSFTFYDLDGHHGKITKDDIVGIVYTIYES. Disordered regions lie at residues 328 to 433, 456 to 479, and 515 to 580; these read MSKQ…QQQL, AGNE…RQQD, and GNDS…QQQR. Basic residues predominate over residues 349–359; that stretch reads RRQHRYRPRKL. Over residues 370–387 the composition is skewed to basic and acidic residues; sequence NSEKEKERERERERESHA. Basic residues predominate over residues 403–414; sequence KSHHHHHHHGRY. A compositionally biased stretch (polar residues) spans 515–525; sequence GNDSGNWQNRH. Composition is skewed to low complexity over residues 526–535 and 570–580; these read LQQSLQQQPQ and HQQLQQQQQQR. The required for nuclear localization and inhibition of Wnt signaling stretch occupies residues 584-613; that stretch reads ECWKSALNRNDLISIIRESMEKNRLCFQLN. Disordered regions lie at residues 619 to 662, 773 to 799, 835 to 899, and 955 to 982; these read NVSP…SPLS, SAAH…HNQK, LQQK…SAGS, and TESG…LDTS. Low complexity-rich tracts occupy residues 624-638 and 653-662; these read RQPA…QRQR and SPAAPQSPLS. Over residues 843–857 the composition is skewed to basic residues; the sequence is RRHRHKQQQQQHHHQ. The span at 858-875 shows a compositional bias: low complexity; sequence QQQQQQQQQNQQQQQQQQ. The segment covering 968-979 has biased composition (acidic residues); that stretch reads EADEGQEQEVEL.

The protein belongs to the NKD family. In terms of assembly, interacts with dsh.

The protein resides in the cell membrane. The protein localises to the cytoplasm. It is found in the nucleus. Cell autonomous antagonist of the canonical Wnt signaling pathway. May activate a second Wnt signaling pathway that controls planar cell polarity. Required for neuroblast specification. The chain is Protein naked cuticle from Drosophila pseudoobscura pseudoobscura (Fruit fly).